A 638-amino-acid polypeptide reads, in one-letter code: MSDKSELKAELERKKQRLAQIREEKKRKEEERKKKETDQKKEAVAPVQEESDLEKKRREAEALLQSMGLTPESPIVFSEYWVPPPMSPSSKSVSTPSEAGSQDSGDGAVGSRTLHWDTDPSVLQLHSDSDLGRGPIKLGMAKITQVDFPPREIVTYTKETQTPVMAQPKEDEEEDDDVVAPKPPIEPEEEKTLKKDEENDSKAPPHELTEEEKQQILHSEEFLSFFDHSTRIVERALSEQINIFFDYSGRDLEDKEGEIQAGAKLSLNRQFFDERWSKHRVVSCLDWSSQYPELLVASYNNNEDAPHEPDGVALVWNMKYKKTTPEYVFHCQSAVMSATFAKFHPNLVVGGTYSGQIVLWDNRSNKRTPVQRTPLSAAAHTHPVYCVNVVGTQNAHNLISISTDGKICSWSLDMLSHPQDSMELVHKQSKAVAVTSMSFPVGDVNNFVVGSEEGSVYTACRHGSKAGISEMFEGHQGPITGIHCHAAVGAVDFSHLFVTSSFDWTVKLWTTKNNKPLYSFEDNADYVYDVMWSPTHPALFACVDGMGRLDLWNLNNDTEVPTASISVEGNPALNRVRWTHSGREIAVGDSEGQIVIYDVGEQIAVPRNDEWARFGRTLAEINANRADAEEEAATRIPA.

Composition is skewed to basic and acidic residues over residues 1-13 (MSDK…ELER) and 20-43 (QIRE…KKEA). 2 disordered regions span residues 1–135 (MSDK…GRGP) and 155–214 (TYTK…EEKQ). Serine 2 is subject to N-acetylserine. Serine 51 is subject to Diphosphoserine. Phosphoserine occurs at positions 51, 73, 81, 84, and 90. The span at 88-97 (PSSKSVSTPS) shows a compositional bias: low complexity. Threonine 95 is modified (phosphothreonine). 3 positions are modified to phosphoserine: serine 97, serine 101, and serine 104. Basic and acidic residues predominate over residues 190–214 (EKTLKKDEENDSKAPPHELTEEEKQ). WD repeat units follow at residues 277–326 (SKHR…TTPE), 330–370 (HCQS…RTPV), 379–420 (AHTH…HPQD), 429–469 (SKAV…AGIS), 474–519 (GHQG…PLYS), 522–562 (DNAD…EVPT), and 568–607 (EGNP…AVPR).

The protein belongs to the dynein intermediate chain family. Homodimer. The cytoplasmic dynein 1 complex consists of two catalytic heavy chains (HCs) and a number of non-catalytic subunits presented by intermediate chains (ICs), light intermediate chains (LICs) and light chains (LCs); the composition seems to vary in respect to the IC, LIC and LC composition. The heavy chain homodimer serves as a scaffold for the probable homodimeric assembly of the respective non-catalytic subunits. The ICs and LICs bind directly to the HC dimer and the LCs assemble on the IC dimer. Interacts with DYNLT3. Interacts with DYNLT1. Interacts (dephosphorylated at Ser-90) with DCTN1. Interacts with BICD2. Interacts with SPEF2. Interacts with CFAP61. As to quaternary structure, (Microbial infection) Interacts with human adenovirus 5 hexon protein; this interaction probably allows virus intracellular transport. Post-translationally, the phosphorylation status of Ser-90 appears to be involved in dynactin-dependent target binding. In terms of processing, pyrophosphorylation by 5-diphosphoinositol pentakisphosphate (5-IP7) promotes interaction with DCTN1. Serine pyrophosphorylation is achieved by Mg(2+)-dependent, but enzyme independent transfer of a beta-phosphate from a inositol pyrophosphate to a pre-phosphorylated serine residue.

The protein localises to the cytoplasm. The protein resides in the cytoskeleton. Its function is as follows. Acts as one of several non-catalytic accessory components of the cytoplasmic dynein 1 complex that are thought to be involved in linking dynein to cargos and to adapter proteins that regulate dynein function. Cytoplasmic dynein 1 acts as a motor for the intracellular retrograde motility of vesicles and organelles along microtubules. The intermediate chains mediate the binding of dynein to dynactin via its 150 kDa component (p150-glued) DCTN1. Involved in membrane-transport, such as Golgi apparatus, late endosomes and lysosomes. This Homo sapiens (Human) protein is Cytoplasmic dynein 1 intermediate chain 2.